A 290-amino-acid polypeptide reads, in one-letter code: Acetyl-coenzyme A carboxylase carboxyl transferase subunit beta (290 aa).

Positions 27–290 constitute a CoA carboxyltransferase N-terminal domain; it reads LWVKCPSCEA…LQRQPADALA (264 aa). Zn(2+) contacts are provided by Cys31, Cys34, Cys50, and Cys53. A C4-type zinc finger spans residues 31-53; it reads CPSCEAVLYRNDVDANLHVCPKC.

The protein belongs to the AccD/PCCB family. In terms of assembly, acetyl-CoA carboxylase is a heterohexamer composed of biotin carboxyl carrier protein (AccB), biotin carboxylase (AccC) and two subunits each of ACCase subunit alpha (AccA) and ACCase subunit beta (AccD). The cofactor is Zn(2+).

The protein resides in the cytoplasm. The enzyme catalyses N(6)-carboxybiotinyl-L-lysyl-[protein] + acetyl-CoA = N(6)-biotinyl-L-lysyl-[protein] + malonyl-CoA. The protein operates within lipid metabolism; malonyl-CoA biosynthesis; malonyl-CoA from acetyl-CoA: step 1/1. Its function is as follows. Component of the acetyl coenzyme A carboxylase (ACC) complex. Biotin carboxylase (BC) catalyzes the carboxylation of biotin on its carrier protein (BCCP) and then the CO(2) group is transferred by the transcarboxylase to acetyl-CoA to form malonyl-CoA. This Burkholderia cenocepacia (strain ATCC BAA-245 / DSM 16553 / LMG 16656 / NCTC 13227 / J2315 / CF5610) (Burkholderia cepacia (strain J2315)) protein is Acetyl-coenzyme A carboxylase carboxyl transferase subunit beta.